Here is a 153-residue protein sequence, read N- to C-terminus: Alpha-amylase inhibitor 0.28 (153 aa).

Positions 1–30 (MWMKTVFWGLLVFMLVATTMAVEYGARSHN) are cleaved as a signal peptide. Disulfide bonds link C37-C84, C51-C72, C59-C112, C73-C128, and C86-C143.

Belongs to the protease inhibitor I6 (cereal trypsin/alpha-amylase inhibitor) family. In terms of assembly, monomer. Post-translationally, the disulfide bonds are essential for the inhibitor activity. As to expression, endosperm.

Its subcellular location is the secreted. Its function is as follows. Alpha-amylase inhibitor. This chain is Alpha-amylase inhibitor 0.28 (IMA1), found in Triticum aestivum (Wheat).